The sequence spans 124 residues: Small ribosomal subunit protein uS12 (124 aa).

Asp-89 bears the 3-methylthioaspartic acid mark. Residues 105-124 form a disordered region; it reads QGVKNRKQARSRYGAKKEKS. The segment covering 108-118 has biased composition (basic residues); it reads KNRKQARSRYG.

This sequence belongs to the universal ribosomal protein uS12 family. Part of the 30S ribosomal subunit. Contacts proteins S8 and S17. May interact with IF1 in the 30S initiation complex.

With S4 and S5 plays an important role in translational accuracy. Its function is as follows. Interacts with and stabilizes bases of the 16S rRNA that are involved in tRNA selection in the A site and with the mRNA backbone. Located at the interface of the 30S and 50S subunits, it traverses the body of the 30S subunit contacting proteins on the other side and probably holding the rRNA structure together. The combined cluster of proteins S8, S12 and S17 appears to hold together the shoulder and platform of the 30S subunit. The sequence is that of Small ribosomal subunit protein uS12 from Mycobacteroides abscessus (strain ATCC 19977 / DSM 44196 / CCUG 20993 / CIP 104536 / JCM 13569 / NCTC 13031 / TMC 1543 / L948) (Mycobacterium abscessus).